The following is a 589-amino-acid chain: Inactive poly [ADP-ribose] polymerase RCD1 (589 aa).

A WWE domain is found at 64-153 (KLSAYENRSG…ETGAKTPLAW (90 aa)). The PARP catalytic domain occupies 248–469 (EAAVSKWDET…LIAKRDNSGV (222 aa)). Disordered regions lie at residues 464 to 504 (RDNS…TRPK) and 569 to 589 (QPKS…AGGL). Polar residues predominate over residues 481-503 (LESNQGARGSGSANSVGSSTTRP). In terms of domain architecture, RST spans 501–572 (TRPKSPWMPF…ITTLQNQPKS (72 aa)). Residues 571–589 (KSKEIPGSIRDHEEGAGGL) show a composition bias toward basic and acidic residues.

In terms of assembly, interacts with the transcription factors NAC013/NTL1 and NAC046. Interacts with dehydration-responsive DREB2 proteins and a number of transcription factors belonging to several protein families. Interacts with turnip crinkle virus (TCV) movement protein P8. Expressed in young developing tissues, such as young leaves and flowers and root tips. In mature plants, expressed in vasculature of leaves and roots, and guard cells.

The protein resides in the nucleus matrix. Inactive ADP-ribosyltransferase that functions with SRO1 to regulate oxidative stress, hormonal and developmental responses. Required for embryogenesis, vegetative and reproductive development, and abiotic stress responses. May regulate several stress-responsive genes. Seems to play a larger developmental role than SRO1. Does not bind NAD in vitro. In Arabidopsis thaliana (Mouse-ear cress), this protein is Inactive poly [ADP-ribose] polymerase RCD1 (RCD1).